The sequence spans 304 residues: Calcium release-activated calcium channel protein 1 (304 aa).

The segment covering 1–11 (MHPEPAPPPSH) has biased composition (pro residues). The disordered stretch occupies residues 1–50 (MHPEPAPPPSHSNPELPVSGGSSTSGSRRSRRRSGDGEPSGAPPLPPPPP). The Cytoplasmic portion of the chain corresponds to 1-89 (MHPEPAPPPS…KLYLSRAKLK (89 aa)). Positions 3–49 (PEPAPPPSHSNPELPVSGGSSTSGSRRSRRRSGDGEPSGAPPLPPPP) are required for generation of inwardly rectifying CRAC currents. The span at 12–27 (SNPELPVSGGSSTSGS) shows a compositional bias: low complexity. The tract at residues 39–61 (PSGAPPLPPPPPAVSYPDWIGQS) is AKAP5 association region. Residues 41–50 (GAPPLPPPPP) are compositionally biased toward pro residues. Positions 72–92 (SMQALSWRKLYLSRAKLKASS) are interaction with STIM1. Residues 90–107 (ASSRTSALLSGFAMVAMV) form a helical membrane-spanning segment. Residues 108–121 (EVQLDTDHDYPPGL) lie on the Extracellular side of the membrane. Residues 122 to 142 (LIVFSACTTVLVAVHLFALMI) form a helical membrane-spanning segment. The Cytoplasmic segment spans residues 143 to 175 (STCILPNIEAVSNVHNLNSVKESPHERMHRHIE). A helical transmembrane segment spans residues 176-196 (LAWAFSTVIGTLLFLAEVVLL). At 197–237 (CWVKFLPLKRQAGQPSPTKPPAESVIVANHSDSSGITPGEA) the chain is on the extracellular side. An N-linked (GlcNAc...) asparagine glycan is attached at asparagine 225. A helical membrane pass occupies residues 238–258 (AAIASTAIMVPCGLVFIVFAV). Over 259–304 (HFYRSLVSHKTDRQFQELNELAEFARLQDQLDHRGDHSLTPGTHYA) the chain is Cytoplasmic. The segment at 275–295 (ELNELAEFARLQDQLDHRGDH) is interaction with STIM1. The residue at position 298 (threonine 298) is a Phosphothreonine.

This sequence belongs to the Orai family. As to quaternary structure, oligomerizes in homomeric and heteromeric ORAI complexes. Native CRAC channels most likely consist of hexameric ORAI heteromers, implying that diverse ORAI1, ORAI2 and ORAI3 subunit combinations with distinct biophysical properties can operate in a cell-type specific way. ARC channels are heteropentamers consisting of three ORAI1 and two ORAI3 subunits. Interacts with STIM1 and STIM2; this regulates channel activity. Interacts with CALM; this may displace STIM1 and STIM2 and might thereby modulate channel activity. Interacts (via N-terminus) with AKAP5 upon store depletion. Interacts with CRACR2A/EFCAB4B; the interaction is direct and takes place in absence of Ca(2+). Forms a complex with CRACR2A/EFCAB4B and STIM1 at low concentration of Ca(2+), the complex dissociates at elevated Ca(2+) concentrations. Interacts with ASPH (isoform 8). Interacts with SLC35G1. Interacts with UBQLN1. Interacts with ADCY8; interaction is calcium store depletion independent; interaction occurs in membrane raft; interaction increases markedly after store depletion; positively regulates SOCE-induced adenylate cyclase activity; contributes to the targeting of ADCY8 to discrete regions of the plasma membrane that are shielded from other calcium events. Interacts with EFHB; the interaction takes place upon Ca(2+)-store depletion. Interacts (via N- and C-termini) with ATP2C2 (via N-terminus); this interaction regulates Ca(2+) influx at the plasma membrane. Interacts with TSPAN18; this interaction regulates ORAI1 exit from the endoplasmic (ER), and/or Golgi, and trafficking to the cell surface. N-glycosylated. N-glycosylation inhibits channel activity in T cells. Post-translationally, ubiquitinated. In terms of processing, cys-195 is oxidated, leading to inactivation of channel activity. Expressed in lactating mammary epithelium (at protein level).

Its subcellular location is the cell membrane. The protein resides in the basolateral cell membrane. The catalysed reaction is Ca(2+)(in) = Ca(2+)(out). Oxidation at Cys-197 leads to inactivation of channel activity. Functionally, pore-forming subunit of two major inward rectifying Ca(2+) channels at the plasma membrane: Ca(2+) release-activated Ca(2+) (CRAC) channels and arachidonate-regulated Ca(2+)-selective (ARC) channels. Assembles with ORAI2 and ORAI3 to form hexameric CRAC channels that mediate Ca(2+) influx upon depletion of endoplasmic reticulum Ca(2+) store and channel activation by Ca(2+) sensor STIM1, a process known as store-operated Ca(2+) entry (SOCE). Various pore subunit combinations may account for distinct CRAC channel spatiotemporal and cell-type specific dynamics. ORAI1 mainly contributes to the generation of Ca(2+) plateaus involved in sustained Ca(2+) entry and is dispensable for cytosolic Ca(2+) oscillations, whereas ORAI2 and ORAI3 generate oscillatory patterns. CRAC channels assemble in Ca(2+) signaling microdomains where Ca(2+) influx is coupled to calmodulin and calcineurin signaling and activation of NFAT transcription factors recruited to ORAI1 via AKAP5. Activates NFATC2/NFAT1 and NFATC3/NFAT4-mediated transcriptional responses. CRAC channels are the main pathway for Ca(2+) influx in T cells and promote the immune response to pathogens by activating NFAT-dependent cytokine and chemokine transcription. Assembles with ORAI3 to form channels that mediate store-independent Ca(2+) influx in response to inflammatory metabolites arachidonate or its derivative leukotriene C4, termed ARC and LRC channels respectively. Plays a prominent role in Ca(2+) influx at the basolateral membrane of mammary epithelial cells independently of the Ca(2+) content of endoplasmic reticulum or Golgi stores. May mediate transepithelial transport of large quantities of Ca(2+) for milk secretion. The polypeptide is Calcium release-activated calcium channel protein 1 (Orai1) (Mus musculus (Mouse)).